The sequence spans 513 residues: Proline-rich receptor-like protein kinase PERK3 (513 aa).

At 1-123 the chain is on the extracellular side; sequence MARSNRCVPQ…SPPSPSRLST (123 aa). Residue Asn11 is glycosylated (N-linked (GlcNAc...) asparagine). Over residues 27-36 the composition is skewed to polar residues; sequence LKSRWQQITM. The tract at residues 27 to 119 is disordered; it reads LKSRWQQITM…GFSLSPPSPS (93 aa). A glycan (N-linked (GlcNAc...) asparagine) is linked at Asn66. Positions 78-89 are enriched in low complexity; the sequence is PSTSTPPRLGNR. Over residues 99 to 111 the composition is skewed to polar residues; the sequence is GQEPTTPTMTPGF. Residues 124 to 144 form a helical membrane-spanning segment; the sequence is GAVVGISIGGGVFVLTLIFFL. The Cytoplasmic portion of the chain corresponds to 145–513; the sequence is CKKKRPRDDK…TAQRYGGDSL (369 aa). Residue Thr172 is modified to Phosphothreonine. The region spanning 183-334 is the Protein kinase domain; sequence FSEANLLGEG…DFGLAKIALD (152 aa). ATP contacts are provided by residues 189–197 and Lys211; that span reads LGEGGFGFV. Tyr256 is modified (phosphotyrosine). Asp307 acts as the Proton acceptor in catalysis. Ser340 is modified (phosphoserine). 2 positions are modified to phosphothreonine: Thr341 and Thr346. Tyr354 is subject to Phosphotyrosine.

It belongs to the protein kinase superfamily. Ser/Thr protein kinase family. As to expression, expressed at low levels in inflorescence bolt, flower buds, siliques, roots, seedlings and leaves.

The protein resides in the cell membrane. The enzyme catalyses L-seryl-[protein] + ATP = O-phospho-L-seryl-[protein] + ADP + H(+). It catalyses the reaction L-threonyl-[protein] + ATP = O-phospho-L-threonyl-[protein] + ADP + H(+). In Arabidopsis thaliana (Mouse-ear cress), this protein is Proline-rich receptor-like protein kinase PERK3 (PERK3).